Consider the following 1181-residue polypeptide: 1-phosphatidylinositol 4,5-bisphosphate phosphodiesterase beta-2 (1181 aa).

Residues 312 to 463 form the PI-PLC X-box domain; sequence QDMTQPLNHY…LRGKILIKNK (152 aa). Residue His327 is part of the active site. Ca(2+) is bound by residues Asn328, Glu357, and Asp359. His374 is an active-site residue. Position 408 (Glu408) interacts with Ca(2+). Residues 465–534 form a disordered region; that stretch reads NQFSGPASPS…EEIKKMQSDE (70 aa). The span at 503–525 shows a compositional bias: acidic residues; the sequence is TEVEEEEVVEEEEEEESGNLDEE. The 117-residue stretch at 547 to 663 folds into the PI-PLC Y-box domain; that stretch reads MSSLVNYIQP…GYLLKHEFMR (117 aa). Positions 666–791 constitute a C2 domain; the sequence is DKQFNPFSVD…CLRSESNMAL (126 aa). The interval 847 to 890 is disordered; the sequence is SGTPVASQSNGAPVSAGNGSTAPGTKATGEEATKEVTEPQTASL. Residues 850–869 show a composition bias toward polar residues; the sequence is PVASQSNGAPVSAGNGSTAP. Over residues 874-883 the composition is skewed to basic and acidic residues; it reads TGEEATKEVT. A coiled-coil region spans residues 893-940; that stretch reads LRELKGVVKLQRRHEKELRELERRGARRWEELLQRGAAQLAELQTQAA. Ser950 carries the post-translational modification Phosphoserine. Coiled-coil stretches lie at residues 974 to 1026 and 1075 to 1141; these read PRVQ…AELK and HIQE…VRAY. The disordered stretch occupies residues 1149–1181; it reads EAEDKPERSCEASEESCPQEPLVSKADTQESRL. A compositionally biased stretch (basic and acidic residues) spans 1150-1159; it reads AEDKPERSCE.

Interacts with RAC1. Forms a complex composed of at least WDR26, a G-beta:gamma unit, and PLCB2. Ca(2+) serves as cofactor.

It carries out the reaction a 1,2-diacyl-sn-glycero-3-phospho-(1D-myo-inositol-4,5-bisphosphate) + H2O = 1D-myo-inositol 1,4,5-trisphosphate + a 1,2-diacyl-sn-glycerol + H(+). The enzyme catalyses a 1,2-diacyl-sn-glycero-3-phospho-(1D-myo-inositol) + H2O = 1D-myo-inositol 1-phosphate + a 1,2-diacyl-sn-glycerol + H(+). The production of the second messenger molecules diacylglycerol (DAG) and inositol 1,4,5-trisphosphate (IP3) is mediated by activated phosphatidylinositol-specific phospholipase C enzymes. In neutrophils, participates in a phospholipase C-activating N-formyl peptide-activated GPCR (G protein-coupled receptor) signaling pathway by promoting RASGRP4 activation by DAG, to promote neutrophil functional responses. This is 1-phosphatidylinositol 4,5-bisphosphate phosphodiesterase beta-2 from Mus musculus (Mouse).